Reading from the N-terminus, the 663-residue chain is 4-hydroxy-3-methylbut-2-en-1-yl diphosphate synthase (flavodoxin) (663 aa).

Positions 568, 571, 602, and 609 each coordinate [4Fe-4S] cluster.

It belongs to the IspG family. Requires [4Fe-4S] cluster as cofactor.

The enzyme catalyses (2E)-4-hydroxy-3-methylbut-2-enyl diphosphate + oxidized [flavodoxin] + H2O + 2 H(+) = 2-C-methyl-D-erythritol 2,4-cyclic diphosphate + reduced [flavodoxin]. It functions in the pathway isoprenoid biosynthesis; isopentenyl diphosphate biosynthesis via DXP pathway; isopentenyl diphosphate from 1-deoxy-D-xylulose 5-phosphate: step 5/6. In terms of biological role, converts 2C-methyl-D-erythritol 2,4-cyclodiphosphate (ME-2,4cPP) into 1-hydroxy-2-methyl-2-(E)-butenyl 4-diphosphate. The sequence is that of 4-hydroxy-3-methylbut-2-en-1-yl diphosphate synthase (flavodoxin) from Leptospira borgpetersenii serovar Hardjo-bovis (strain JB197).